The following is a 206-amino-acid chain: Large ribosomal subunit protein uL4 (206 aa).

The protein belongs to the universal ribosomal protein uL4 family. As to quaternary structure, part of the 50S ribosomal subunit.

One of the primary rRNA binding proteins, this protein initially binds near the 5'-end of the 23S rRNA. It is important during the early stages of 50S assembly. It makes multiple contacts with different domains of the 23S rRNA in the assembled 50S subunit and ribosome. In terms of biological role, forms part of the polypeptide exit tunnel. This chain is Large ribosomal subunit protein uL4, found in Rhodopseudomonas palustris (strain BisA53).